A 94-amino-acid chain; its full sequence is PTS system galactitol-specific EIIB component (94 aa).

The region spanning Met1 to Gly94 is the PTS EIIB type-2 domain. Catalysis depends on Cys9, which acts as the Phosphocysteine intermediate; for EIIB activity. Residue Cys9 is modified to Phosphocysteine; by EIIA.

Forms a complex with one each of subunit of GatA, GatB and 2 subunits of GatC.

Its subcellular location is the cytoplasm. It catalyses the reaction galactitol(out) + N(pros)-phospho-L-histidyl-[protein] = galactitol 1-phosphate(in) + L-histidyl-[protein]. The phosphoenolpyruvate-dependent sugar phosphotransferase system (PTS), a major carbohydrate active transport system, catalyzes the phosphorylation of incoming sugar substrates concomitant with their translocation across the cell membrane. The enzyme II complex composed of GatA, GatB and GatC is involved in galactitol transport. The chain is PTS system galactitol-specific EIIB component (gatB) from Escherichia coli O157:H7.